The following is a 217-amino-acid chain: Protein GrpE (217 aa).

Composition is skewed to acidic residues over residues 1–28, 136–152, and 204–217; these read MSDDQGDAVEASSEADEEASTSPDEGDD, DILDGEGVEAIEPDPGT, and SEAEDDADGEDGDE. Disordered stretches follow at residues 1–44, 135–157, and 193–217; these read MSDD…NDPA, DDILDGEGVEAIEPDPGTETDPK, and QVTVSEGPSGDSEAEDDADGEDGDE.

Belongs to the GrpE family. In terms of assembly, homodimer.

Its subcellular location is the cytoplasm. In terms of biological role, participates actively in the response to hyperosmotic and heat shock by preventing the aggregation of stress-denatured proteins, in association with DnaK and GrpE. It is the nucleotide exchange factor for DnaK and may function as a thermosensor. Unfolded proteins bind initially to DnaJ; upon interaction with the DnaJ-bound protein, DnaK hydrolyzes its bound ATP, resulting in the formation of a stable complex. GrpE releases ADP from DnaK; ATP binding to DnaK triggers the release of the substrate protein, thus completing the reaction cycle. Several rounds of ATP-dependent interactions between DnaJ, DnaK and GrpE are required for fully efficient folding. The protein is Protein GrpE of Natronomonas pharaonis (strain ATCC 35678 / DSM 2160 / CIP 103997 / JCM 8858 / NBRC 14720 / NCIMB 2260 / Gabara) (Halobacterium pharaonis).